The chain runs to 370 residues: MAPRPLRRHPPLHHSFHESRRDPVADKHRINFEPVDIEMEVGEDEYILDAAFRQGIHLMHGCREGRCSACKSFVLEGDIQMEDYSTFACNDAEVDEGHVLLCRSTAYSDCTIELLNFDEDELLGGVPIQDVRTRVTRIEPMTKDIVSLRLAPVEPAGYEFKPGQYSDLHIPGTEEHRSFSMATTRSTPGHVEFLIKKYPGGKFAGLLEDGISVGDEIALTGPYGSFTIKEGHVLPMVFIGGGAGMAPLLSLLRHMSETGNTRQVHFYYGARTPQDLFYVDEILELGRGLTDFTFVACLSESMDPPPVGAIAVEDGNVTDVVGRREPDIGRAEVYLCGPPPMVDAALELLEANGTPKDQIFYDKFTSPAFE.

Positions 1–14 (MAPRPLRRHPPLHH) are enriched in basic residues. A disordered region spans residues 1-21 (MAPRPLRRHPPLHHSFHESRR). A 2Fe-2S ferredoxin-type domain is found at 28–118 (HRINFEPVDI…DCTIELLNFD (91 aa)). [2Fe-2S] cluster contacts are provided by Cys-62, Cys-67, Cys-70, and Cys-102. The FAD-binding FR-type domain maps to 128 to 229 (IQDVRTRVTR…TGPYGSFTIK (102 aa)).

It belongs to the TmoA/XamoA family. The propane 2-monooxygenase multicomponent enzyme system is composed of an electron transfer component and a monooxygenase component interacting with the effector protein PrmD. The electron transfer component is composed of a reductase (PrmB), and the monooxygenase component is formed by a large subunit (PrmA) and a small subunit (PrmC). The cofactor is FAD. [2Fe-2S] cluster serves as cofactor.

Functionally, reductase component of the propane 2-monooxygenase multicomponent enzyme system which is involved in the degradation of propane via the O2-dependent hydroxylation of propane. Reductase catalyzes the transfer of electrons from NADH or NADPH to monooxygenase. This Rhodococcus jostii (strain RHA1) protein is Propane 2-monooxygenase, reductase component.